Reading from the N-terminus, the 478-residue chain is Zinc metalloproteinase/disintegrin (478 aa).

The signal sequence occupies residues 1-20 (MIQVLLVTICLAAFPYQGSS). A propeptide spanning residues 21-188 (IILESGNVND…PIKKVSQLNL (168 aa)) is cleaved from the precursor. The 198-residue stretch at 194–391 (RHVDIVVVVD…QNPQCILNKP (198 aa)) folds into the Peptidase M12B domain. A disulfide bond links C207 and C248. N279 carries an N-linked (GlcNAc...) (complex) asparagine glycan. 3 cysteine pairs are disulfide-bonded: C305/C386, C345/C370, and C347/C353. A Zn(2+)-binding site is contributed by H330. The active site involves E331. Zn(2+) is bound by residues H334 and H340. N-linked (GlcNAc...) (complex) asparagine glycosylation is present at N369. A propeptide spanning residues 392 to 407 (LRTVSIPVSGNEHLEA) is cleaved from the precursor. The region spanning 397–478 (IPVSGNEHLE…ADCPRYHSHA (82 aa)) is the Disintegrin domain. Disulfide bonds link C411/C426, C413/C421, C420/C443, C434/C440, C439/C464, and C452/C471. The Cell attachment site signature appears at 456–458 (RGD). Residues 476 to 478 (SHA) constitute a propeptide that is removed on maturation.

The protein belongs to the venom metalloproteinase (M12B) family. P-II subfamily. P-IIa sub-subfamily. In terms of assembly, monomeric (disintegrin). It depends on Zn(2+) as a cofactor. Post-translationally, glycans are composed of 4 GlcNAc, 3 Man, 2 Gal, 2 NeuAC and 1 Fuc residue. As to expression, expressed by the venom gland.

Its subcellular location is the secreted. In terms of biological role, impairs hemostasis in the envenomed animal. Its function is as follows. Inhibits platelet aggregation induced by ADP, thrombin, platelet-activating factor and collagen. Acts by inhibiting fibrinogen interaction with platelet receptors alpha-IIb/beta-3 (ITGA2B/ITGB3). This Calloselasma rhodostoma (Malayan pit viper) protein is Zinc metalloproteinase/disintegrin.